A 170-amino-acid chain; its full sequence is Peptide deformylase 1 (170 aa).

Positions 92 and 135 each coordinate Fe cation. The active site involves Glu-136. His-139 is a binding site for Fe cation.

Belongs to the polypeptide deformylase family. The cofactor is Fe(2+).

The enzyme catalyses N-terminal N-formyl-L-methionyl-[peptide] + H2O = N-terminal L-methionyl-[peptide] + formate. Its function is as follows. Removes the formyl group from the N-terminal Met of newly synthesized proteins. Requires at least a dipeptide for an efficient rate of reaction. N-terminal L-methionine is a prerequisite for activity but the enzyme has broad specificity at other positions. This chain is Peptide deformylase 1, found in Coxiella burnetii (strain RSA 493 / Nine Mile phase I).